The sequence spans 937 residues: CAP-Gly domain-containing linker protein 1 homolog (937 aa).

The region spanning Gly-39 to Pro-81 is the CAP-Gly domain. Disordered stretches follow at residues Glu-90–Thr-131 and Leu-264–Gln-548. The span at Leu-268–Phe-281 shows a compositional bias: polar residues. Basic and acidic residues predominate over residues Glu-285–Gly-295. Residues Asn-296 to Pro-309 are compositionally biased toward polar residues. 4 stretches are compositionally biased toward basic and acidic residues: residues His-317 to Pro-353, Ile-383 to Ser-396, Pro-409 to Arg-424, and Ala-463 to Ile-473. Residues Ser-492–Ser-501 are compositionally biased toward low complexity. 2 coiled-coil regions span residues Glu-566–Ile-740 and Gln-773–Gln-800. Disordered stretches follow at residues Met-819 to Asn-866 and Pro-916 to Met-937. Positions Arg-832 to Ser-844 are enriched in low complexity. A compositionally biased stretch (polar residues) spans Met-845–Ser-858.

The protein is CAP-Gly domain-containing linker protein 1 homolog of Caenorhabditis elegans.